The following is a 31-amino-acid chain: AGGKATCCPCFMCSYTAGCPWGQCAHHCGCD.

It belongs to the sea anemone short toxin (type III) family. In terms of processing, contains 4 disulfide bonds.

The protein resides in the secreted. The protein localises to the nematocyst. Functionally, binds specifically to voltage-gated sodium channels (Nav), thereby delaying their inactivation during signal transduction. This is Delta-actitoxin-Dar1b from Dofleinia armata (Armed anemone).